A 639-amino-acid polypeptide reads, in one-letter code: CREB3 regulatory factor (639 aa).

The disordered stretch occupies residues 302–422 (PLPQEGPGSL…SVEDLKEVTS (121 aa)). A compositionally biased stretch (low complexity) spans 310-328 (SLAAGESSSLSASTSVSDS). Over residues 339-351 (LFVSDNLGEQPTK) the composition is skewed to polar residues. Positions 355 to 370 (EEDEEDEEDVDDEDHD) are enriched in acidic residues. Over residues 371–380 (EGFGSEHELS) the composition is skewed to basic and acidic residues. The segment covering 381 to 401 (ENEEEEEEEEDYEDDKDDDIS) has biased composition (acidic residues). The region spanning 521 to 584 (TARPRSRKEK…VNRVQNPRDE (64 aa)) is the bZIP domain. The interval 523–532 (RPRSRKEKNK) is basic motif. The segment at 533–540 (LASRACRL) is leucine-zipper.

Belongs to the bZIP family. CREBRF subfamily. In terms of assembly, interacts (via leucine-zipper domain) with CREB3 (via leucine-zipper domain); the interaction promotes CREB3 degradation. Post-translationally, probably degraded by the proteasome.

The protein resides in the nucleus. Functionally, acts as a negative regulator of the endoplasmic reticulum stress response or unfolded protein response (UPR). Represses the transcriptional activity of CREB3 during the UPR. Recruits CREB3 into nuclear foci. In Homo sapiens (Human), this protein is CREB3 regulatory factor (CREBRF).